A 361-amino-acid polypeptide reads, in one-letter code: 3-dehydroquinate synthase (361 aa).

Residues 72 to 77, 130 to 131, Lys-142, and Lys-151 contribute to the NAD(+) site; these read SGEKEK and TT. Residues Glu-184, His-247, and His-264 each contribute to the Zn(2+) site.

Belongs to the sugar phosphate cyclases superfamily. Dehydroquinate synthase family. Requires NAD(+) as cofactor. Co(2+) is required as a cofactor. Zn(2+) serves as cofactor.

It localises to the cytoplasm. The enzyme catalyses 7-phospho-2-dehydro-3-deoxy-D-arabino-heptonate = 3-dehydroquinate + phosphate. The protein operates within metabolic intermediate biosynthesis; chorismate biosynthesis; chorismate from D-erythrose 4-phosphate and phosphoenolpyruvate: step 2/7. In terms of biological role, catalyzes the conversion of 3-deoxy-D-arabino-heptulosonate 7-phosphate (DAHP) to dehydroquinate (DHQ). The chain is 3-dehydroquinate synthase from Bacillus cereus (strain ATCC 14579 / DSM 31 / CCUG 7414 / JCM 2152 / NBRC 15305 / NCIMB 9373 / NCTC 2599 / NRRL B-3711).